The following is a 427-amino-acid chain: MTNSGEKKFQPLHAPKGIPDYVPPQSSEFLAVRTAFLDAAHNAGYEHIELPVFEDTSLFARGVGESTDVVSKEMYTFADRGGRSVTLRPEGTAGVMRAVIQHNLDRGQLPAKLAYHGPFFRYERPQAGRFRQLQQVGVEAIGVDDPALDAEVIALADRCFRSIGLDGFRLELTSLGDSTDRPAYRAKLQEFLATLPLDEETQRRAELNPLRVLDDKRPQMQEMLADAPLMKDHLSDSSREHFETVTGLLEDMGVEYTINPRMVRGLDYYTKTCFEFVHDGLGAQSGIGGGGRYDGLMAQLGGQDLSGIGFGLGVDRALLALEAEGKTASTGRRVDVFGIPMGDAAKRHMAALINELRAAGVAADMAYGNRGLKGAMKAANRAHAQLAVVIGDQELEAGTVAVKDLQLGEQHDVAVADLVTHIRRQLA.

It belongs to the class-II aminoacyl-tRNA synthetase family. Homodimer.

The protein resides in the cytoplasm. The enzyme catalyses tRNA(His) + L-histidine + ATP = L-histidyl-tRNA(His) + AMP + diphosphate + H(+). The sequence is that of Histidine--tRNA ligase from Corynebacterium urealyticum (strain ATCC 43042 / DSM 7109).